The chain runs to 160 residues: MSRRHAAEKRVILPDMKYNSIVLSRFINNIMKEGKKALAEKIVYSAFNKIEKKYRVDPYQTFNNAMHNVKPHLEVTSVRVGGANYQVPTHVDERRGYALASRWIINAASKRSEKMMIDKLAEELFEASNNRGVAIKKKEDTHKMAEANKAFSHFSPKKMK.

It belongs to the universal ribosomal protein uS7 family. In terms of assembly, part of the 30S ribosomal subunit. Contacts proteins S9 and S11.

In terms of biological role, one of the primary rRNA binding proteins, it binds directly to 16S rRNA where it nucleates assembly of the head domain of the 30S subunit. Is located at the subunit interface close to the decoding center, probably blocks exit of the E-site tRNA. In Rickettsia massiliae (strain Mtu5), this protein is Small ribosomal subunit protein uS7.